We begin with the raw amino-acid sequence, 694 residues long: GRB2-associated-binding protein 1 (694 aa).

An N-acetylserine modification is found at serine 2. The PH domain occupies 5 to 116 (EVVCSGWLRK…WVRCICDICG (112 aa)). Disordered stretches follow at residues 122–164 (EDPV…PYQL) and 194–231 (PEPTRTHADSAKSTSSETDCNDNVPSHKNPASSQSKHG). Positions 145-157 (APPSTQADSSSAT) are enriched in polar residues. Residues 194 to 203 (PEPTRTHADS) show a composition bias toward basic and acidic residues. A compositionally biased stretch (polar residues) spans 204–231 (AKSTSSETDCNDNVPSHKNPASSQSKHG). A phosphoserine mark is found at serine 251, serine 253, serine 266, and serine 304. The interval 323–386 (FPEGTLGQTS…TAGMSPSRSN (64 aa)) is disordered. Polar residues predominate over residues 362 to 386 (IPRTASDTDSSYCIPTAGMSPSRSN). Threonine 387 carries the phosphothreonine modification. 2 positions are modified to phosphoserine: serine 402 and serine 454. 2 disordered regions span residues 493–532 (AHMGFRSSPKTPPRRPVPVADCEPPPVDRNLKPDRKVKPA) and 544–656 (ELQA…ADER). Alanine 547 bears the Phosphoserine mark. Residues 594-611 (PNLSSEDPNLFGSNSLDG) are compositionally biased toward polar residues. At tyrosine 627 the chain carries Phosphotyrosine. A Phosphothreonine modification is found at threonine 638. Residue serine 651 is modified to Phosphoserine. Position 659 is a phosphotyrosine (tyrosine 659). The interval 671 to 694 (KSTREAWTDGRQSTESETPAKSVK) is disordered. Basic and acidic residues predominate over residues 672 to 684 (STREAWTDGRQST). Serine 683 carries the post-translational modification Phosphoserine. Over residues 685–694 (ESETPAKSVK) the composition is skewed to polar residues.

This sequence belongs to the GAB family. In terms of assembly, identified in a complex containing FRS2, GRB2, GAB1, PIK3R1 and SOS1. Forms a tripartite complex containing GAB1, METTL13 and SPRY2. Within the complex interacts with METTL13. Interacts with GRB2 and with other SH2-containing proteins. Interacts with phosphorylated LAT2. Interacts with PTPRJ. Interacts (phosphorylated) with PTPN11. Interacts with HCK. Phosphorylated in response to FGFR1 activation. Phosphorylated on tyrosine residue(s) by the epidermal growth factor receptor (EGFR) and the insulin receptor (INSR). Tyrosine phosphorylation of GAB1 mediates interaction with several proteins that contain SH2 domains. Phosphorylated on tyrosine residues by HCK upon IL6 signaling.

In terms of biological role, adapter protein that plays a role in intracellular signaling cascades triggered by activated receptor-type kinases. Plays a role in FGFR1 signaling. Probably involved in signaling by the epidermal growth factor receptor (EGFR) and the insulin receptor (INSR). Involved in the MET/HGF-signaling pathway. The sequence is that of GRB2-associated-binding protein 1 (GAB1) from Homo sapiens (Human).